Here is a 931-residue protein sequence, read N- to C-terminus: Isoleucine--tRNA ligase (931 aa).

Residues 57–67 (PYANGNIHIGH) carry the 'HIGH' region motif. Glu-555 contacts L-isoleucyl-5'-AMP. Positions 596-600 (KMSKS) match the 'KMSKS' region motif. Lys-599 is a binding site for ATP. Zn(2+)-binding residues include Cys-890, Cys-893, Cys-910, and Cys-913.

This sequence belongs to the class-I aminoacyl-tRNA synthetase family. IleS type 1 subfamily. As to quaternary structure, monomer. Zn(2+) is required as a cofactor.

It is found in the cytoplasm. It carries out the reaction tRNA(Ile) + L-isoleucine + ATP = L-isoleucyl-tRNA(Ile) + AMP + diphosphate. In terms of biological role, catalyzes the attachment of isoleucine to tRNA(Ile). As IleRS can inadvertently accommodate and process structurally similar amino acids such as valine, to avoid such errors it has two additional distinct tRNA(Ile)-dependent editing activities. One activity is designated as 'pretransfer' editing and involves the hydrolysis of activated Val-AMP. The other activity is designated 'posttransfer' editing and involves deacylation of mischarged Val-tRNA(Ile). The chain is Isoleucine--tRNA ligase from Limosilactobacillus reuteri subsp. reuteri (strain JCM 1112) (Lactobacillus reuteri).